The following is a 363-amino-acid chain: Ribosome-binding ATPase YchF (363 aa).

One can recognise an OBG-type G domain in the interval 3–256; sequence FKCGIVGLPN…LDDEERDEFM (254 aa). Residue 12–17 coordinates ATP; that stretch reads NVGKST. 2 residues coordinate Mg(2+): S16 and T36. The region spanning 278–361 is the TGS domain; that stretch reads NLQTYFTAGV…KDGDVMNFLF (84 aa).

This sequence belongs to the TRAFAC class OBG-HflX-like GTPase superfamily. OBG GTPase family. YchF/OLA1 subfamily. Requires Mg(2+) as cofactor.

Functionally, ATPase that binds to both the 70S ribosome and the 50S ribosomal subunit in a nucleotide-independent manner. The sequence is that of Ribosome-binding ATPase YchF from Escherichia coli O157:H7.